The chain runs to 216 residues: Histidine biosynthesis bifunctional protein HisIE (216 aa).

The tract at residues 1-127 is phosphoribosyl-AMP cyclohydrolase; the sequence is MSFIDSLSPQ…GKIVAPPGDT (127 aa). Positions 128-216 are phosphoribosyl-ATP pyrophosphohydrolase; it reads LSQVFQVICD…VYRKLQERRR (89 aa).

This sequence in the N-terminal section; belongs to the PRA-CH family. The protein in the C-terminal section; belongs to the PRA-PH family.

Its subcellular location is the cytoplasm. It catalyses the reaction 1-(5-phospho-beta-D-ribosyl)-ATP + H2O = 1-(5-phospho-beta-D-ribosyl)-5'-AMP + diphosphate + H(+). The enzyme catalyses 1-(5-phospho-beta-D-ribosyl)-5'-AMP + H2O = 1-(5-phospho-beta-D-ribosyl)-5-[(5-phospho-beta-D-ribosylamino)methylideneamino]imidazole-4-carboxamide. Its pathway is amino-acid biosynthesis; L-histidine biosynthesis; L-histidine from 5-phospho-alpha-D-ribose 1-diphosphate: step 2/9. The protein operates within amino-acid biosynthesis; L-histidine biosynthesis; L-histidine from 5-phospho-alpha-D-ribose 1-diphosphate: step 3/9. This chain is Histidine biosynthesis bifunctional protein HisIE (hisI), found in Nostoc sp. (strain PCC 7120 / SAG 25.82 / UTEX 2576).